The sequence spans 322 residues: Sideroflexin-1 (322 aa).

An N-acetylserine modification is found at S2. Topologically, residues 2-102 are mitochondrial matrix; the sequence is SGEVPPNINI…MSAQVPMNMT (101 aa). The helical transmembrane segment at 103–120 threads the bilayer; it reads ITGCMMTFYRTTPAVLFW. Topologically, residues 121-146 are mitochondrial intermembrane; that stretch reads QWINQSFNAVVNYTNRSGDAPLTVNE. The chain crosses the membrane as a helical span at residues 147 to 167; it reads LGTAYVSATTGAVATALGLNA. Over 168 to 174 the chain is Mitochondrial matrix; the sequence is LTKHVSP. The helical transmembrane segment at 175–195 threads the bilayer; it reads LIGRFVPFAAVAAANCINIPL. The Mitochondrial intermembrane segment spans residues 196 to 228; it reads MRQRELKVGIPVTDENGTRLGESTNAAKQAITQ. Residues 229-249 form a helical membrane-spanning segment; the sequence is VVISRILMAAPGMAIPPFIMN. Residues 250–266 are Mitochondrial matrix-facing; the sequence is TLEKKAFLKRFPWMSAP. A helical membrane pass occupies residues 267–287; the sequence is IQVTLVGFCLVFATPLCCALF. Topologically, residues 288–322 are mitochondrial intermembrane; that stretch reads PQKSSMSVTSLEDDLQASIQKSHPELRRVYFNKGL.

It belongs to the sideroflexin family.

Its subcellular location is the mitochondrion inner membrane. The catalysed reaction is L-serine(in) = L-serine(out). The enzyme catalyses L-alanine(in) = L-alanine(out). It carries out the reaction L-cysteine(in) = L-cysteine(out). Amino acid transporter importing serine, an essential substrate of the mitochondrial branch of the one-carbon pathway, into mitochondria. Mitochondrial serine is then converted to glycine and formate, which exits to the cytosol where it is used to generate the charged folates that serve as one-carbon donors. May also transport other amino acids including alanine and cysteine. The polypeptide is Sideroflexin-1 (Sfxn1) (Rattus norvegicus (Rat)).